The primary structure comprises 1679 residues: Probable myosin heavy chain ECU04_1000 (1679 aa).

The segment covering 1–14 (MEGTTNKDIGSGSS) has biased composition (polar residues). The disordered stretch occupies residues 1 to 22 (MEGTTNKDIGSGSSRPGGEVSV). One can recognise a Myosin N-terminal SH3-like domain in the interval 31–79 (MEKKWVWAPSSKEAYVCGFVVKEEGDVLEIDCRGVIVRHKSCEVFRMNP). Residues 83–754 (DMVDDLAELS…VLADIEDMRD (672 aa)) enclose the Myosin motor domain. Position 176-183 (176-183 (GESGAGKT)) interacts with ATP. Positions 624–646 (LASLMSELRRTNPHFVRCIIPNL) are actin-binding. Residues 823–1644 (GEMKEKEAMI…SKMLEMKKKL (822 aa)) adopt a coiled-coil conformation.

It belongs to the TRAFAC class myosin-kinesin ATPase superfamily. Myosin family.

Its function is as follows. Cellular myosin that appears to play a role in cytokinesis, cell shape, and specialized functions such as secretion and capping. The polypeptide is Probable myosin heavy chain ECU04_1000 (Encephalitozoon cuniculi (strain GB-M1) (Microsporidian parasite)).